The chain runs to 360 residues: Vitopine synthase (360 aa).

Belongs to the lysopine/nopaline/octopine/opine/vitopine dehydrogenases family.

In Allorhizobium ampelinum (strain ATCC BAA-846 / DSM 112012 / S4) (Agrobacterium vitis (strain S4)), this protein is Vitopine synthase (vis).